The sequence spans 285 residues: Transcription factor JAMYB (285 aa).

2 HTH myb-type domains span residues 26–78 (SAEL…LNYL) and 79–133 (RPDV…QKHA). DNA-binding regions (H-T-H motif) lie at residues 54 to 78 (WNAL…LNYL) and 106 to 129 (WSKI…RTRV).

It is found in the nucleus. Functionally, probable transcription factor that may be involved in the jasmonate-dependent defense responses to the rice blast fungus Magnaporthe oryzae. Does not seem to function in the salicylic acid-dependent signaling pathway. The protein is Transcription factor JAMYB of Oryza sativa subsp. japonica (Rice).